The chain runs to 97 residues: Putative pterin-4-alpha-carbinolamine dehydratase (97 aa).

It belongs to the pterin-4-alpha-carbinolamine dehydratase family.

The catalysed reaction is (4aS,6R)-4a-hydroxy-L-erythro-5,6,7,8-tetrahydrobiopterin = (6R)-L-erythro-6,7-dihydrobiopterin + H2O. The polypeptide is Putative pterin-4-alpha-carbinolamine dehydratase (Saccharolobus solfataricus (strain ATCC 35092 / DSM 1617 / JCM 11322 / P2) (Sulfolobus solfataricus)).